Consider the following 435-residue polypeptide: uncharacterized protein (435 aa).

Positions 261, 294, 318, and 366 each coordinate S-adenosyl-L-methionine. Cys-393 acts as the Nucleophile in catalysis.

This sequence belongs to the class I-like SAM-binding methyltransferase superfamily. RNA M5U methyltransferase family.

This is an uncharacterized protein from Bifidobacterium longum (strain NCC 2705).